Here is a 585-residue protein sequence, read N- to C-terminus: Trehalase (585 aa).

Residues 1-32 (MAKTTPMAKPSVGLLTLQVLVFCALTGSLASA) form the signal peptide. Substrate is bound by residues Arg184 and 191 to 192 (WD). The N-linked (GlcNAc...) asparagine glycan is linked to Asn207. Substrate is bound by residues Asn228, 237 to 239 (RSQ), 302 to 304 (RPE), and Gly336. The Proton donor/acceptor role is filled by Asp338. An N-linked (GlcNAc...) asparagine glycan is attached at Asn348. The Proton donor/acceptor role is filled by Glu535. Glu550 contributes to the substrate binding site.

This sequence belongs to the glycosyl hydrolase 37 family. Expressed by the venom gland.

It is found in the secreted. The enzyme catalyses alpha,alpha-trehalose + H2O = alpha-D-glucose + beta-D-glucose. This Pimpla hypochondriaca (Parasitoid wasp) protein is Trehalase (tre1).